The following is a 207-amino-acid chain: Large ribosomal subunit protein bL25 (207 aa).

It belongs to the bacterial ribosomal protein bL25 family. CTC subfamily. As to quaternary structure, part of the 50S ribosomal subunit; part of the 5S rRNA/L5/L18/L25 subcomplex. Contacts the 5S rRNA. Binds to the 5S rRNA independently of L5 and L18.

Functionally, this is one of the proteins that binds to the 5S RNA in the ribosome where it forms part of the central protuberance. The sequence is that of Large ribosomal subunit protein bL25 from Brucella canis (strain ATCC 23365 / NCTC 10854 / RM-666).